We begin with the raw amino-acid sequence, 548 residues long: Sesquiterpene synthase TPS1 (548 aa).

(2E,6E)-farnesyl diphosphate-binding residues include Arg-264, Asp-301, Asp-305, Arg-442, and Asp-445. Residues Asp-301 and Asp-305 each contribute to the Mg(2+) site. Residues 301-305 carry the DDXXD motif motif; sequence DDTYD. 2 residues coordinate Mg(2+): Asp-445 and Glu-453.

It belongs to the terpene synthase family. Tpsa subfamily. As to quaternary structure, monomer. It depends on Mg(2+) as a cofactor. In terms of tissue distribution, expressed in leaves and stems.

It localises to the cytoplasm. The enzyme catalyses (2E,6E)-farnesyl diphosphate = germacrene D + diphosphate. It carries out the reaction (2E,6E)-farnesyl diphosphate = (-)-(E)-beta-caryophyllene + diphosphate. It catalyses the reaction (2E,6E)-farnesyl diphosphate = beta-copaene + diphosphate. Its pathway is secondary metabolite biosynthesis; terpenoid biosynthesis. In terms of biological role, sesquiterpene synthase involved in the biosynthesis of volatile compounds. Mediates the conversion of (2E,6E)-farnesyl diphosphate (FPP) into germacrene D, (-)-(E)-beta-caryophyllene and beta-copaene. This chain is Sesquiterpene synthase TPS1, found in Xanthium strumarium (Rough cocklebur).